Here is an 86-residue protein sequence, read N- to C-terminus: Putative membrane protein insertion efficiency factor (86 aa).

Positions phenylalanine 66–aspartate 86 are disordered.

It belongs to the UPF0161 family.

The protein localises to the cell inner membrane. Could be involved in insertion of integral membrane proteins into the membrane. The protein is Putative membrane protein insertion efficiency factor of Chlorobium luteolum (strain DSM 273 / BCRC 81028 / 2530) (Pelodictyon luteolum).